The primary structure comprises 402 residues: Acetate kinase (402 aa).

A Mg(2+)-binding site is contributed by Asn-13. ATP is bound at residue Lys-20. Residue Arg-94 participates in substrate binding. Residue Asp-151 is the Proton donor/acceptor of the active site. ATP is bound by residues 211-215, 285-287, and 333-337; these read HLGNG, DFR, and GVGEN. Glu-387 is a binding site for Mg(2+).

Belongs to the acetokinase family. As to quaternary structure, homodimer. It depends on Mg(2+) as a cofactor. The cofactor is Mn(2+).

The protein localises to the cytoplasm. The enzyme catalyses acetate + ATP = acetyl phosphate + ADP. It functions in the pathway metabolic intermediate biosynthesis; acetyl-CoA biosynthesis; acetyl-CoA from acetate: step 1/2. Catalyzes the formation of acetyl phosphate from acetate and ATP. Can also catalyze the reverse reaction. The chain is Acetate kinase from Nocardia farcinica (strain IFM 10152).